The sequence spans 38 residues: Potassium channel toxin alpha-KTx 3.8 (38 aa).

Intrachain disulfides connect cysteine 8–cysteine 28, cysteine 14–cysteine 33, and cysteine 18–cysteine 35. Residues 26–33 (GKCMNGKC) form an interaction with Ca(2+)-activated K(+) channels region.

Expressed by the venom gland.

It localises to the secreted. Potassium channel inhibitor. This is Potassium channel toxin alpha-KTx 3.8 from Hottentotta tamulus sindicus (Scorpion).